The sequence spans 168 residues: Translationally-controlled tumor protein homolog (168 aa).

The 168-residue stretch at 1–168 folds into the TCTP domain; the sequence is MLLYKDVISG…FKDGLVSEKF (168 aa). S78 is modified (phosphoserine).

This sequence belongs to the TCTP family.

It is found in the cytoplasm. Functionally, involved in calcium binding and microtubule stabilization. May be a guanine nucleotide-free chaperone (GFC). This Schizosaccharomyces pombe (strain 972 / ATCC 24843) (Fission yeast) protein is Translationally-controlled tumor protein homolog (p23fy).